The chain runs to 293 residues: Ribosomal protein L11 methyltransferase (293 aa).

S-adenosyl-L-methionine contacts are provided by Thr-145, Gly-166, Asp-188, and Asn-230.

This sequence belongs to the methyltransferase superfamily. PrmA family.

The protein resides in the cytoplasm. It carries out the reaction L-lysyl-[protein] + 3 S-adenosyl-L-methionine = N(6),N(6),N(6)-trimethyl-L-lysyl-[protein] + 3 S-adenosyl-L-homocysteine + 3 H(+). Functionally, methylates ribosomal protein L11. The protein is Ribosomal protein L11 methyltransferase of Yersinia pseudotuberculosis serotype I (strain IP32953).